The primary structure comprises 650 residues: Probable E3 ubiquitin ligase complex SCF subunit scon-2 (650 aa).

The region spanning 124–170 is the F-box domain; that stretch reads IDFISALPVELAQKVLCYLDTVSLTKAAQVSQRWRTLADSDAVWVRM. The disordered stretch occupies residues 200–244; sequence QRQLAKGGPQGRVTELADSHDSQDRSVNQHGKRPAAEAEEEDPIK. Basic and acidic residues predominate over residues 214 to 223; it reads ELADSHDSQD. 5 WD repeats span residues 292-320, 332-360, 372-400, 411-441, and 453-488; these read GHEN…KIWN, GHTA…KVWN, AHTD…KIFD, GHSD…KLWD, and GHVG…AMSV. A disordered region spans residues 482–525; sequence NQDAMSVSSGGSGSPSMSHAQIERAGSPGSHSSSHNLLPSSLPS. Low complexity-rich tracts occupy residues 487 to 499 and 507 to 525; these read SVSS…PSMS and GSPG…SLPS. WD repeat units lie at residues 528–564, 576–604, and 616–644; these read EDVR…RLWD, GHLE…KTWE, and GHCG…RLHS.

Belongs to the WD repeat MET30/SCONB/SCON-2 family. Component of the SCF(scon-2) E3 ubiquitin ligase complex.

Its pathway is protein modification; protein ubiquitination. Its function is as follows. Component of the SCF(scon-2) E3 ubiquitin ligase complex involved in the regulation of sulfur metabolite repression, probably by mediating the inactivation or degradation of the metR transcription factor. The protein is Probable E3 ubiquitin ligase complex SCF subunit scon-2 (scon-2) of Neurospora crassa (strain ATCC 24698 / 74-OR23-1A / CBS 708.71 / DSM 1257 / FGSC 987).